A 1505-amino-acid polypeptide reads, in one-letter code: Synaptonemal complex protein 2 (1505 aa).

The segment at 439–483 is disordered; that stretch reads EKSNLQKKLTNPLEPDNSSSQRDRKNSQDEITTPSRKKMSEASMI. Residues Ser457 and Ser465 each carry the phosphoserine modification. Phosphothreonine is present on Thr471. Ser494 carries the post-translational modification Phosphoserine. The residue at position 503 (Thr503) is a Phosphothreonine. Ser507, Ser516, Ser525, and Ser534 each carry phosphoserine. A disordered region spans residues 536-571; it reads KSRQSDGRNRGNNRANHNKTATVQNKGHEHHESPDQ. Residues Thr613 and Thr638 each carry the phosphothreonine modification. Residues Ser651, Ser655, and Ser746 each carry the phosphoserine modification. A disordered region spans residues 745-764; that stretch reads KSPSRKSMRSHTKSRKELMS. Residues 748-758 are compositionally biased toward basic residues; it reads SRKSMRSHTKS. Ser920 carries the post-translational modification Phosphoserine. Thr922 carries the phosphothreonine modification. Disordered stretches follow at residues 949–974 and 1035–1080; these read YSRNKNTKKCKSIKSRSSTEKGQPRS and KEET…NGRE. Residues 953–962 show a composition bias toward basic residues; it reads KNTKKCKSIK. A phosphoserine mark is found at Ser1121, Ser1123, Ser1130, Ser1146, Ser1150, Ser1162, Ser1165, and Ser1170. A Phosphothreonine modification is found at Thr1174. A Phosphoserine modification is found at Ser1188. Positions 1199 to 1239 are disordered; sequence NSYSDVSSNSSEKLYMEPESPDSCENHVQSKREENHAASPF. A compositionally biased stretch (low complexity) spans 1200–1209; sequence SYSDVSSNSS. Phosphoserine is present on residues Ser1218 and Ser1221. A compositionally biased stretch (basic and acidic residues) spans 1222–1234; it reads CENHVQSKREENH. 3 positions are modified to phosphoserine: Ser1237, Ser1280, and Ser1283. Residue Thr1318 is modified to Phosphothreonine. The stretch at 1384–1435 forms a coiled coil; it reads ENIDKFQVTLLDELEKVEKDSQTLRDLEKEFVDIEEKIVHKMRAFHQSERER.

This sequence belongs to the SYCP2 family. As to quaternary structure, component of the lateral elements of synaptonemal complexes. Interacts with TEX11. Heterodimer with SYCP3. Interacts with SYCP3, SMC1A and SMC3. Phosphorylated. In terms of tissue distribution, detected in spermatocytes and testis (at protein level). Spermatocytes and oocytes. Meiotic prophase cells.

The protein resides in the nucleus. It localises to the chromosome. Functionally, major component of the axial/lateral elements of synaptonemal complexes (SCS) during meiotic prophase. Plays a role in the assembly of synaptonemal complexes. Required for normal meiotic chromosome synapsis during oocyte and spermatocyte development and for normal male and female fertility. Required for insertion of SYCP3 into synaptonemal complexes. May be involved in the organization of chromatin by temporarily binding to DNA scaffold attachment regions. Requires SYCP3, but not SYCP1, in order to be incorporated into the axial/lateral elements. The protein is Synaptonemal complex protein 2 (Sycp2) of Rattus norvegicus (Rat).